Reading from the N-terminus, the 215-residue chain is Pyrrolidone-carboxylate peptidase (215 aa).

Catalysis depends on residues E81, C144, and H168.

Belongs to the peptidase C15 family. As to quaternary structure, homotetramer.

The protein resides in the cytoplasm. It carries out the reaction Release of an N-terminal pyroglutamyl group from a polypeptide, the second amino acid generally not being Pro.. Functionally, removes 5-oxoproline from various penultimate amino acid residues except L-proline. This chain is Pyrrolidone-carboxylate peptidase (pcp), found in Bacillus subtilis (strain 168).